We begin with the raw amino-acid sequence, 936 residues long: MAAQRNRSKESKDCSGLVLLCLFFGIPWEAGARQISYSIPEELEKGSFVGNISKDLGLAPRELAERGVRIVSRGRTQLFSLNPRSGSLVTAGRIDREELCAQSARCVVSFNILVEDRVKLFGIEIEVTDINDNAPTFQAENLDVKINENVAAGMRFPLPEAIDPDVGVNSLQSYQLSPNKHFSLRVQSRANGVKYPELVLEHSLDREEEAIHHLVLTASDGGDPLRSGTVLVSVTVFDANDNAPVFTLPEYRVSVPENLPVGTQLLTVTATDRDEGANGEVTYSFRKLPDTQLLKFQLNKYTGEIKISENLDYEETGFYEVEIQAEDGGAYLATAKVLITVEDVNDNSPELTITSLFSPVTEDSPLGTVVALLNVHDLDSEQNGQVTCSILAYLPFKLEKSIDSYYRLVIHRALDREQVSSYNITVRATDGGSPPLSTEAHFTLQVADINDNPPTFSQVSYFTYIPENNARGASIFSVTALDPDSKENARIIYSLAEDTIQGVPLSSYISINSDTGVLYALRSFDYEQFHELQMQVTASDSGDPPLSSNVSLSLFVLDQNDNAPEILYPALPTDGSTGVELAPRSAEPGYLVTKVVAVDRDSGQNAWLSYRLLKASEPGLFAVGEHTGEVRTARALLDRDALKQSLVVAVQDHGQPPLSATVTLTVAVADSIPQVLADLGSFESPANSETSDLTLYLVVAVAAVSCVFLAFVIVLLALRLRRWHKSRLLQASGGGLTGVSGSHFVGVDGVRAFLQTYSHEVSLTADSRKSHLIFPQPNYADTLISQESCEKKDPLSLLDDSKFPIEDTPLVPQAPPNTDWRFSQAQRPGTSGSQNGDDTGTWPNNQFDTEMLQAMILASASEAADGSSTLGGGAGTMGLSARYGPQFTLQHVPDYRQNVYIPGSNATLTNAAGKRDGKAPAGGNGNKKKSGKKEKK.

A signal peptide spans Met1–Ala32. Cadherin domains are found at residues Arg33 to Phe137, Gln138 to Phe246, Thr247 to Leu351, Thr352 to Phe456, Ser457 to Ile566, and Asp574 to Asn687. Residues Arg33–Tyr696 are Extracellular-facing. Residue Asn51 is glycosylated (N-linked (GlcNAc...) asparagine). N-linked (GlcNAc...) asparagine glycosylation is found at Asn423 and Asn549. Residues Leu697–Ala717 traverse the membrane as a helical segment. Topologically, residues Leu718 to Lys936 are cytoplasmic. 2 disordered regions span residues Ser801–Asn845 and Ala906–Lys936. The span at Trp820–Asn845 shows a compositional bias: polar residues. Residues Asn926–Lys936 show a composition bias toward basic residues.

The protein resides in the cell membrane. Functionally, potential calcium-dependent cell-adhesion protein. May be involved in the establishment and maintenance of specific neuronal connections in the brain. The sequence is that of Protocadherin gamma-A10 (PCDHGA10) from Pan troglodytes (Chimpanzee).